Reading from the N-terminus, the 328-residue chain is GMP reductase (328 aa).

Residue cysteine 176 is the Thioimidate intermediate of the active site. 205–228 (IIADGGIRTHGDVAKSIRFGATMV) lines the NADP(+) pocket.

Belongs to the IMPDH/GMPR family. GuaC type 2 subfamily.

It catalyses the reaction IMP + NH4(+) + NADP(+) = GMP + NADPH + 2 H(+). Functionally, catalyzes the irreversible NADPH-dependent deamination of GMP to IMP. It functions in the conversion of nucleobase, nucleoside and nucleotide derivatives of G to A nucleotides, and in maintaining the intracellular balance of A and G nucleotides. In Bacillus thuringiensis (strain Al Hakam), this protein is GMP reductase.